The chain runs to 126 residues: Fluoride-specific ion channel FluC (126 aa).

4 consecutive transmembrane segments (helical) span residues 7–24 (LWVSLGGIVGACARYFLS), 35–55 (FPWGTLLINITGSFVLGLFLV), 69–89 (LLIAIGFCGAYTTFSSYAYES), and 98–118 (WGLFAGNVLANNILCLAAVLG). Positions 77 and 80 each coordinate Na(+).

The protein belongs to the fluoride channel Fluc/FEX (TC 1.A.43) family.

Its subcellular location is the cell inner membrane. The catalysed reaction is fluoride(in) = fluoride(out). Na(+) is not transported, but it plays an essential structural role and its presence is essential for fluoride channel function. In terms of biological role, fluoride-specific ion channel. Important for reducing fluoride concentration in the cell, thus reducing its toxicity. This is Fluoride-specific ion channel FluC from Koribacter versatilis (strain Ellin345).